Here is a 514-residue protein sequence, read N- to C-terminus: Maltose/maltodextrin transport system permease protein MalF (514 aa).

Topologically, residues 1-16 (MDVIKKKHWWQSDQLK) are cytoplasmic. The helical transmembrane segment at 17-36 (WSVIGLLGLLVGYLVVLMYV) threads the bilayer. Over 37–39 (QGE) the chain is Periplasmic. A helical transmembrane segment spans residues 40–57 (YLFAIMTLILSSAGLYIF). Residues 58-69 (ANRKTYAWRYVY) are Cytoplasmic-facing. Residues 70–92 (PGLAGMGLFVLFPLVCTIAIAFT) traverse the membrane as a helical segment. Over 93–283 (NYSSTNQLTF…QKPFFAIFVW (191 aa)) the chain is Periplasmic. Residues 281-505 (FVWTVVFSVL…LLVGALAIVN (225 aa)) form the ABC transmembrane type-1 domain. A helical membrane pass occupies residues 284–306 (TVVFSVLTVVLTVAVGMVLACLV). Residues 307 to 318 (QWEALKGKAIYR) lie on the Cytoplasmic side of the membrane. A helical transmembrane segment spans residues 319-341 (VLLILPYAVPSFISILIFKGLFN). Residues 342–369 (QSFGEINMMLSALFGIKPAWFSDPNTAR) are Periplasmic-facing. The helical transmembrane segment at 370 to 392 (AMVIIVNTWLGYPYMMILCMGLL) threads the bilayer. Over 393-412 (KAIPDDLYEASAMDGAGPFQ) the chain is Cytoplasmic. Residues 413–435 (NFFKITLPLLIKPLTPLMIASFA) form a helical membrane-spanning segment. The Periplasmic segment spans residues 436 to 483 (FNFNNFVLIQLLTNGGPDRLGTTTPAGYTDLLVSYTYRIAFEGGGGQD). The helical transmembrane segment at 484-506 (FGLAAAIATLIFLLVGALAIVNL) threads the bilayer. The Cytoplasmic portion of the chain corresponds to 507-514 (KATRMKFD).

The protein belongs to the binding-protein-dependent transport system permease family. MalFG subfamily. The complex is composed of two ATP-binding proteins (MalK), two transmembrane proteins (MalG and MalF) and a solute-binding protein (MalE).

The protein resides in the cell inner membrane. Part of the ABC transporter complex MalEFGK involved in maltose/maltodextrin import. Probably responsible for the translocation of the substrate across the membrane. This is Maltose/maltodextrin transport system permease protein MalF (malF) from Salmonella typhi.